The following is a 729-amino-acid chain: Fatty acid oxidation complex subunit alpha (729 aa).

The segment at 1–189 is enoyl-CoA hydratase/isomerase; the sequence is MLYKGDTLYL…KIGLVDGVVK (189 aa). Residue aspartate 296 coordinates substrate. Residues 311 to 729 form a 3-hydroxyacyl-CoA dehydrogenase region; sequence ETPKQAAVLG…ARPVGDLKTA (419 aa). NAD(+) is bound by residues methionine 324, aspartate 343, 400–402, lysine 407, and serine 429; that span reads VVE. The For 3-hydroxyacyl-CoA dehydrogenase activity role is filled by histidine 450. Residue asparagine 453 participates in NAD(+) binding. Positions 500 and 660 each coordinate substrate. Residues 708–729 are disordered; it reads RHNEPYYPPVEPARPVGDLKTA.

It in the N-terminal section; belongs to the enoyl-CoA hydratase/isomerase family. In the C-terminal section; belongs to the 3-hydroxyacyl-CoA dehydrogenase family. As to quaternary structure, heterotetramer of two alpha chains (FadB) and two beta chains (FadA).

It catalyses the reaction a (3S)-3-hydroxyacyl-CoA + NAD(+) = a 3-oxoacyl-CoA + NADH + H(+). The enzyme catalyses a (3S)-3-hydroxyacyl-CoA = a (2E)-enoyl-CoA + H2O. The catalysed reaction is a 4-saturated-(3S)-3-hydroxyacyl-CoA = a (3E)-enoyl-CoA + H2O. It carries out the reaction (3S)-3-hydroxybutanoyl-CoA = (3R)-3-hydroxybutanoyl-CoA. It catalyses the reaction a (3Z)-enoyl-CoA = a 4-saturated (2E)-enoyl-CoA. The enzyme catalyses a (3E)-enoyl-CoA = a 4-saturated (2E)-enoyl-CoA. It functions in the pathway lipid metabolism; fatty acid beta-oxidation. Functionally, involved in the aerobic and anaerobic degradation of long-chain fatty acids via beta-oxidation cycle. Catalyzes the formation of 3-oxoacyl-CoA from enoyl-CoA via L-3-hydroxyacyl-CoA. It can also use D-3-hydroxyacyl-CoA and cis-3-enoyl-CoA as substrate. In Escherichia coli (strain UTI89 / UPEC), this protein is Fatty acid oxidation complex subunit alpha.